The chain runs to 132 residues: Ribosome-binding factor A (132 aa).

Belongs to the RbfA family. As to quaternary structure, monomer. Binds 30S ribosomal subunits, but not 50S ribosomal subunits or 70S ribosomes.

The protein resides in the cytoplasm. Functionally, one of several proteins that assist in the late maturation steps of the functional core of the 30S ribosomal subunit. Associates with free 30S ribosomal subunits (but not with 30S subunits that are part of 70S ribosomes or polysomes). Required for efficient processing of 16S rRNA. May interact with the 5'-terminal helix region of 16S rRNA. This Teredinibacter turnerae (strain ATCC 39867 / T7901) protein is Ribosome-binding factor A.